The following is a 310-amino-acid chain: N-acetyl-gamma-glutamyl-phosphate reductase (310 aa).

Cysteine 117 is a catalytic residue.

It belongs to the NAGSA dehydrogenase family. Type 2 subfamily.

The protein localises to the cytoplasm. It carries out the reaction N-acetyl-L-glutamate 5-semialdehyde + phosphate + NADP(+) = N-acetyl-L-glutamyl 5-phosphate + NADPH + H(+). The protein operates within amino-acid biosynthesis; L-arginine biosynthesis; N(2)-acetyl-L-ornithine from L-glutamate: step 3/4. Its function is as follows. Catalyzes the NADPH-dependent reduction of N-acetyl-5-glutamyl phosphate to yield N-acetyl-L-glutamate 5-semialdehyde. The sequence is that of N-acetyl-gamma-glutamyl-phosphate reductase from Brucella melitensis biotype 1 (strain ATCC 23456 / CCUG 17765 / NCTC 10094 / 16M).